A 191-amino-acid polypeptide reads, in one-letter code: Hypoxanthine/guanine phosphoribosyltransferase (191 aa).

Belongs to the purine/pyrimidine phosphoribosyltransferase family. Archaeal HPRT subfamily. Homodimer.

It localises to the cytoplasm. The enzyme catalyses IMP + diphosphate = hypoxanthine + 5-phospho-alpha-D-ribose 1-diphosphate. It carries out the reaction GMP + diphosphate = guanine + 5-phospho-alpha-D-ribose 1-diphosphate. It functions in the pathway purine metabolism; IMP biosynthesis via salvage pathway; IMP from hypoxanthine: step 1/1. Functionally, catalyzes a salvage reaction resulting in the formation of IMP that is energically less costly than de novo synthesis. The polypeptide is Hypoxanthine/guanine phosphoribosyltransferase (Methanocella paludicola (strain DSM 17711 / JCM 13418 / NBRC 101707 / SANAE)).